Consider the following 770-residue polypeptide: PH and SEC7 domain-containing protein 2 (770 aa).

Positions 1–24 are enriched in basic and acidic residues; that stretch reads MDEEKLPCELHKEGSATQEDHGLE. 2 disordered regions span residues 1 to 65 and 181 to 304; these read MDEE…RGPD and IQQR…ANGC. A compositionally biased stretch (polar residues) spans 32 to 45; it reads QNGTAASEGLSSHI. Phosphoserine is present on serine 188. 2 stretches are compositionally biased toward low complexity: residues 216 to 234 and 285 to 296; these read LGSPLRRSISSSRSENVLS and ELSSSEGLEPGS. The region spanning 256 to 459 is the SEC7 domain; that stretch reads DDEDDEDTDK…KTLYNSIKNE (204 aa). The PH domain occupies 509–622; it reads TTYKHGVLTR…WILRINLVAA (114 aa). A helical transmembrane segment spans residues 619–636; it reads LVAAIFSAPAFPAAVSSM. The stretch at 650-677 forms a coiled coil; that stretch reads RLCQEEQLRSHENKLRQVTAELAEHRCH. The interval 738–770 is disordered; it reads PALRKTHSSPALSLGHGPVTGSKATKDTSASDT.

It belongs to the PSD family.

Its subcellular location is the cell membrane. It localises to the cell projection. It is found in the ruffle membrane. The protein resides in the cleavage furrow. In Mus musculus (Mouse), this protein is PH and SEC7 domain-containing protein 2 (Psd2).